The following is a 201-amino-acid chain: Transgelin (201 aa).

Position 2 is an N-acetylalanine (A2). Positions 24-137 constitute a Calponin-homology (CH) domain; that stretch reads EELEERLVEW…RTLMALGSLA (114 aa). At S166 the chain carries Phosphoserine. Residue K172 is modified to N6-acetyllysine. A Calponin-like repeat occupies 175–200; it reads IGLQMGSNRGASQAGMTGYGRPRQII. S181 is modified (phosphoserine). The residue at position 183 (R183) is an Omega-N-methylarginine.

This sequence belongs to the calponin family.

It is found in the cytoplasm. Actin cross-linking/gelling protein. The sequence is that of Transgelin (Tagln) from Mus musculus (Mouse).